The sequence spans 1375 residues: DNA-directed RNA polymerase subunit beta (1375 aa).

This sequence belongs to the RNA polymerase beta chain family. As to quaternary structure, the RNAP catalytic core consists of 2 alpha, 1 beta, 1 beta' and 1 omega subunit. When a sigma factor is associated with the core the holoenzyme is formed, which can initiate transcription.

The catalysed reaction is RNA(n) + a ribonucleoside 5'-triphosphate = RNA(n+1) + diphosphate. Its function is as follows. DNA-dependent RNA polymerase catalyzes the transcription of DNA into RNA using the four ribonucleoside triphosphates as substrates. This chain is DNA-directed RNA polymerase subunit beta, found in Coxiella burnetii (strain RSA 331 / Henzerling II).